A 102-amino-acid polypeptide reads, in one-letter code: Large ribosomal subunit protein bL28 (102 aa).

This sequence belongs to the bacterial ribosomal protein bL28 family.

The polypeptide is Large ribosomal subunit protein bL28 (Bradyrhizobium diazoefficiens (strain JCM 10833 / BCRC 13528 / IAM 13628 / NBRC 14792 / USDA 110)).